The chain runs to 159 residues: Succinate dehydrogenase [ubiquinone] cytochrome b small subunit, mitochondrial (159 aa).

Residues 1-56 constitute a mitochondrion transit peptide; the sequence is MAVLWRLSAVCGAQGGRALLLRTPVVRPAHISAFLQDRPIPEWCGVQHIHLSPGHH. The Mitochondrial matrix segment spans residues 57–63; sequence SGSKAAS. A helical transmembrane segment spans residues 64–85; it reads LHWTSERVVSVLLLGLLPAAYL. The Mitochondrial intermembrane segment spans residues 86–90; the sequence is NPCSA. Residues 91–111 form a helical membrane-spanning segment; that stretch reads MDYSLAATLTLHGHWGLGQVV. H102 serves as a coordination point for heme b. Topologically, residues 112 to 120 are mitochondrial matrix; sequence TDYVHGDAS. An a ubiquinone-binding site is contributed by Y114. Residues 121-142 traverse the membrane as a helical segment; the sequence is QKAAKAGLLALSALTFAGLCYF. The Mitochondrial intermembrane segment spans residues 143–159; the sequence is NYHDVGICKAVAMLWKL.

The protein belongs to the CybS family. In terms of assembly, component of complex II composed of four subunits: the flavoprotein (FP) SDHA, iron-sulfur protein (IP) SDHB, and a cytochrome b560 composed of SDHC and SDHD.

The protein resides in the mitochondrion inner membrane. It participates in carbohydrate metabolism; tricarboxylic acid cycle. Functionally, membrane-anchoring subunit of succinate dehydrogenase (SDH) that is involved in complex II of the mitochondrial electron transport chain and is responsible for transferring electrons from succinate to ubiquinone (coenzyme Q). SDH also oxidizes malate to the non-canonical enol form of oxaloacetate, enol-oxaloacetate. Enol-oxaloacetate, which is a potent inhibitor of the succinate dehydrogenase activity, is further isomerized into keto-oxaloacetate. The protein is Succinate dehydrogenase [ubiquinone] cytochrome b small subunit, mitochondrial (SDHD) of Pongo abelii (Sumatran orangutan).